The chain runs to 367 residues: Glutamate 5-kinase (367 aa).

Lys10 is an ATP binding site. Substrate is bound by residues Ser50, Asp137, and Asn149. ATP contacts are provided by residues 169-170 (TD) and 211-217 (TGGMETK). The PUA domain maps to 275–353 (AGDITVDDGA…QDISDILGYE (79 aa)).

Belongs to the glutamate 5-kinase family.

It is found in the cytoplasm. It carries out the reaction L-glutamate + ATP = L-glutamyl 5-phosphate + ADP. It participates in amino-acid biosynthesis; L-proline biosynthesis; L-glutamate 5-semialdehyde from L-glutamate: step 1/2. Functionally, catalyzes the transfer of a phosphate group to glutamate to form L-glutamate 5-phosphate. The polypeptide is Glutamate 5-kinase (Sodalis glossinidius (strain morsitans)).